The primary structure comprises 255 residues: Ribosomal RNA small subunit methyltransferase G (255 aa).

Positions 1-44 (MSSPGRPKGEYRSAQHAGAVAGPPGRPDGEHRGSSGADPNGRLR) are disordered. S-adenosyl-L-methionine-binding positions include glycine 118, leucine 123, 169-170 (VE), and arginine 183.

The protein belongs to the methyltransferase superfamily. RNA methyltransferase RsmG family.

It is found in the cytoplasm. It catalyses the reaction guanosine(527) in 16S rRNA + S-adenosyl-L-methionine = N(7)-methylguanosine(527) in 16S rRNA + S-adenosyl-L-homocysteine. In terms of biological role, specifically methylates the N7 position of guanine in position 527 of 16S rRNA. The polypeptide is Ribosomal RNA small subunit methyltransferase G (Bordetella petrii (strain ATCC BAA-461 / DSM 12804 / CCUG 43448)).